The following is a 350-amino-acid chain: UDP-glucose 4-epimerase (350 aa).

7-38 contributes to the NAD(+) binding site; that stretch reads KILVTGSAGFIGTHTVVQLLNNGFNVSIIDNF. A substrate-binding site is contributed by Ser133. The Proton acceptor role is filled by Tyr157.

It belongs to the NAD(P)-dependent epimerase/dehydratase family. Requires NAD(+) as cofactor.

The enzyme catalyses UDP-alpha-D-glucose = UDP-alpha-D-galactose. It participates in carbohydrate metabolism; galactose metabolism. In Pisum sativum (Garden pea), this protein is UDP-glucose 4-epimerase (GALE).